Consider the following 341-residue polypeptide: NADH-quinone oxidoreductase subunit H (341 aa).

Helical transmembrane passes span 4 to 24 (LVNILFILVPLLLSVAYLTYF), 38 to 58 (PSVVGPFGLLQPFADAIKLLI), 70 to 90 (ILFIMAPMLTFILALIAWAVI), 115 to 135 (VGVLYVLAISSLGVYGVIIAG), 161 to 181 (IGLIVAAVVITTGTLNLGEMV), 187 to 207 (MPFWVDLLLMPIGIIFFISLL), 239 to 259 (LFFLGEYANMILASAMMTIFF), 275 to 295 (IPGLIWFVLKIVILLFIFIWI), and 314 to 334 (VFLPISVLWVILISGVLLFTG).

This sequence belongs to the complex I subunit 1 family. NDH-1 is composed of 14 different subunits. Subunits NuoA, H, J, K, L, M, N constitute the membrane sector of the complex.

The protein resides in the cell membrane. The enzyme catalyses a quinone + NADH + 5 H(+)(in) = a quinol + NAD(+) + 4 H(+)(out). NDH-1 shuttles electrons from NADH, via FMN and iron-sulfur (Fe-S) centers, to quinones in the respiratory chain. The immediate electron acceptor for the enzyme in this species is believed to be ubiquinone. Couples the redox reaction to proton translocation (for every two electrons transferred, four hydrogen ions are translocated across the cytoplasmic membrane), and thus conserves the redox energy in a proton gradient. This subunit may bind ubiquinone. The polypeptide is NADH-quinone oxidoreductase subunit H (Wolbachia pipientis wMel).